The sequence spans 388 residues: Lipid-A-disaccharide synthase (388 aa).

It belongs to the LpxB family.

The enzyme catalyses a lipid X + a UDP-2-N,3-O-bis[(3R)-3-hydroxyacyl]-alpha-D-glucosamine = a lipid A disaccharide + UDP + H(+). Its pathway is bacterial outer membrane biogenesis; LPS lipid A biosynthesis. Condensation of UDP-2,3-diacylglucosamine and 2,3-diacylglucosamine-1-phosphate to form lipid A disaccharide, a precursor of lipid A, a phosphorylated glycolipid that anchors the lipopolysaccharide to the outer membrane of the cell. The polypeptide is Lipid-A-disaccharide synthase (Saccharophagus degradans (strain 2-40 / ATCC 43961 / DSM 17024)).